The primary structure comprises 701 residues: CRS2-associated factor 1, chloroplastic (701 aa).

Residues Met-1–Asn-37 constitute a chloroplast transit peptide. 2 disordered regions span residues Val-68–Lys-136 and Leu-191–Gly-221. CRM domains follow at residues Glu-241 to Arg-337 and Glu-359 to Pro-455. A disordered region spans residues Leu-471–Val-532. 2 stretches are compositionally biased toward polar residues: residues Val-479–Pro-492 and Thr-520–Lys-530. Residues Arg-564–Leu-586 form a CRS2 binding region.

Interacts with CRS2 and RNA. Part of large ribonucleo-protein complexes that include group IIB introns, CRS2 and CAF1.

It localises to the plastid. Its subcellular location is the chloroplast stroma. In terms of biological role, required for the splicing of group IIB introns in chloroplasts. Forms splicing particles with CRS2. Interacts with RNA and confers intron specificity of the splicing particles. This is CRS2-associated factor 1, chloroplastic from Arabidopsis thaliana (Mouse-ear cress).